The sequence spans 325 residues: MLKPFVFITKPIPEEIEAFIGEHCRYEVWQEDTLPSDVLFEKLKEAEGLLTSGTSGPSINRELLEHAPKLKVVSNQSVGYDNFDIEAMKERGVVGTHTPYTLDDTVADLAFSLILSSARRVAELDRFVRAGKWGTVEEEALFGIDVHHQTLGIIGMGRIGEQAARRAKFGFDMEVLYHNRHRKQETEDSIGVKYAELDTLLEQSDFILLITPLTDETYHMIGEREFKLMKNSAIFVNISRGKTVDEKALIRALQEGWIRGAGLDVYEKEPVTQDNPLLQLDNVTLLPHIGSATAKVRFNMCKQAAENMLAAIQGQTPKNLTREFQ.

NAD(+) contacts are provided by residues 158–159 (RI), Thr211, 238–240 (ISR), and Asp264. Arg240 is an active-site residue. Glu269 is a catalytic residue. The Proton donor role is filled by His288. 288–291 (HIGS) lines the NAD(+) pocket.

This sequence belongs to the D-isomer specific 2-hydroxyacid dehydrogenase family.

It carries out the reaction D-gluconate + NADP(+) = 2-dehydro-D-gluconate + NADPH + H(+). This is Probable 2-ketogluconate reductase (yvcT) from Bacillus subtilis (strain 168).